Here is a 268-residue protein sequence, read N- to C-terminus: UPF0739 protein C1orf74 homolog (268 aa).

This sequence belongs to the UPF0739 family.

The chain is UPF0739 protein C1orf74 homolog from Salmo salar (Atlantic salmon).